The sequence spans 367 residues: tRNA-specific 2-thiouridylase MnmA 2 (367 aa).

ATP contacts are provided by residues 10 to 17 and Met36; that span reads GMSGGVDS. The tract at residues 96–98 is interaction with target base in tRNA; that stretch reads NPD. Residue Cys101 is the Nucleophile of the active site. Residues Cys101 and Cys197 are joined by a disulfide bond. Gly125 is an ATP binding site. Positions 147-149 are interaction with tRNA; the sequence is KDQ. The active-site Cysteine persulfide intermediate is Cys197. The interaction with tRNA stretch occupies residues 314-315; it reads RY.

This sequence belongs to the MnmA/TRMU family.

It localises to the cytoplasm. The catalysed reaction is S-sulfanyl-L-cysteinyl-[protein] + uridine(34) in tRNA + AH2 + ATP = 2-thiouridine(34) in tRNA + L-cysteinyl-[protein] + A + AMP + diphosphate + H(+). Functionally, catalyzes the 2-thiolation of uridine at the wobble position (U34) of tRNA, leading to the formation of s(2)U34. The sequence is that of tRNA-specific 2-thiouridylase MnmA 2 from Aliarcobacter butzleri (strain RM4018) (Arcobacter butzleri).